The chain runs to 717 residues: Coupling protein TraD (717 aa).

At 1-27 (MSFNAKDMTQGGQIASMRIRMFSQIAN) the chain is on the cytoplasmic side. Residues 28–47 (IMLYCLFIFFWILVGLVLWI) traverse the membrane as a helical segment. The Periplasmic portion of the chain corresponds to 48–104 (KISWQTFVNGCIYWWCTTLEGMRDLIKSQPVYEIQYYGKTFRMNAAQVLHDKYMIWC). A helical transmembrane segment spans residues 105-130 (SEQLWSAFVLAAVVALVICLITFFVV). Topologically, residues 131–717 (SWILGRQGKQ…GEDVEPGDDF (587 aa)) are cytoplasmic. 192-199 (GTVGAGKS) provides a ligand contact to ATP. 2 disordered regions span residues 614–639 (EDVTQAEQPQQPVSPAINDKKSDSGV) and 650–669 (LKMKPEEEMEQQLPPGISES).

Belongs to the TrwB coupling protein family. In terms of assembly, interacts with relaxosome component TraM. May form a hexamer in the membrane.

The protein resides in the cell inner membrane. Functionally, conjugative DNA transfer (CDT) is the unidirectional transfer of ssDNA plasmid from a donor to a recipient cell. It is the central mechanism by which antibiotic resistance and virulence factors are propagated in bacterial populations. Couples the transferosome to a type IV secretion system. Probably forms a pore through which single-stranded plasmid DNA is transferred to the secretion system. The last 37 residues are important for determining plasmid specificity and transfer efficiency, with additional specificity conferred by the TraD-TraM pair. In Escherichia coli (strain K12), this protein is Coupling protein TraD (traD).